Reading from the N-terminus, the 80-residue chain is Acyl carrier protein (80 aa).

The region spanning 4-79 (NSIEEKVRSI…DVVAYIEKVQ (76 aa)) is the Carrier domain. An O-(pantetheine 4'-phosphoryl)serine modification is found at Ser39.

It belongs to the acyl carrier protein (ACP) family. Post-translationally, 4'-phosphopantetheine is transferred from CoA to a specific serine of apo-ACP by AcpS. This modification is essential for activity because fatty acids are bound in thioester linkage to the sulfhydryl of the prosthetic group.

It is found in the cytoplasm. It participates in lipid metabolism; fatty acid biosynthesis. Functionally, carrier of the growing fatty acid chain in fatty acid biosynthesis. The chain is Acyl carrier protein from Akkermansia muciniphila (strain ATCC BAA-835 / DSM 22959 / JCM 33894 / BCRC 81048 / CCUG 64013 / CIP 107961 / Muc).